The following is a 351-amino-acid chain: Phospho-N-acetylmuramoyl-pentapeptide-transferase (351 aa).

The next 10 helical transmembrane spans lie at 17–37, 61–83, 88–105, 130–150, 158–178, 190–210, 230–250, 254–274, 279–299, and 328–348; these read TAYA…FIIS, MGIP…FFWI, IYFL…CLGF, ILFS…HVSI, SLKL…LISA, GLAI…AYLT, LVIF…FNAY, IMMG…VALI, ILFA…IIQV, and QVVI…LSTI.

It belongs to the glycosyltransferase 4 family. MraY subfamily. Mg(2+) serves as cofactor.

The protein resides in the cell inner membrane. It carries out the reaction UDP-N-acetyl-alpha-D-muramoyl-L-alanyl-gamma-D-glutamyl-meso-2,6-diaminopimeloyl-D-alanyl-D-alanine + di-trans,octa-cis-undecaprenyl phosphate = di-trans,octa-cis-undecaprenyl diphospho-N-acetyl-alpha-D-muramoyl-L-alanyl-D-glutamyl-meso-2,6-diaminopimeloyl-D-alanyl-D-alanine + UMP. It participates in cell wall biogenesis; peptidoglycan biosynthesis. Catalyzes the initial step of the lipid cycle reactions in the biosynthesis of the cell wall peptidoglycan: transfers peptidoglycan precursor phospho-MurNAc-pentapeptide from UDP-MurNAc-pentapeptide onto the lipid carrier undecaprenyl phosphate, yielding undecaprenyl-pyrophosphoryl-MurNAc-pentapeptide, known as lipid I. In Borrelia recurrentis (strain A1), this protein is Phospho-N-acetylmuramoyl-pentapeptide-transferase.